The chain runs to 140 residues: Small ribosomal subunit protein uS12 (140 aa).

Disordered stretches follow at residues 1-20 (MPTI…VKSD) and 35-55 (QTNV…TMTP). A 3-methylthioaspartic acid modification is found at Asp-102. Positions 121-140 (DGRMQGRSKYGTKRPKAAKK) are disordered. Residues 130–140 (YGTKRPKAAKK) are compositionally biased toward basic residues.

The protein belongs to the universal ribosomal protein uS12 family. Part of the 30S ribosomal subunit. Contacts proteins S8 and S17. May interact with IF1 in the 30S initiation complex.

With S4 and S5 plays an important role in translational accuracy. Its function is as follows. Interacts with and stabilizes bases of the 16S rRNA that are involved in tRNA selection in the A site and with the mRNA backbone. Located at the interface of the 30S and 50S subunits, it traverses the body of the 30S subunit contacting proteins on the other side and probably holding the rRNA structure together. The combined cluster of proteins S8, S12 and S17 appears to hold together the shoulder and platform of the 30S subunit. The chain is Small ribosomal subunit protein uS12 from Exiguobacterium sp. (strain ATCC BAA-1283 / AT1b).